We begin with the raw amino-acid sequence, 200 residues long: Sorting nexin-10 (200 aa).

The interval 8–125 (EEFVSVWVRD…SLHLFLQSHL (118 aa)) is required for interaction with ATP6V1D. Residues 10–127 (FVSVWVRDPR…HLFLQSHLNS (118 aa)) form the PX domain. A 1,2-diacyl-sn-glycero-3-phospho-(1D-myo-inositol-3-phosphate) contacts are provided by arginine 53, lysine 79, and arginine 94. Positions 156-167 (FPEEEEGKKEND) are enriched in basic and acidic residues. Residues 156-200 (FPEEEEGKKENDIDYDSESSSSGFGHSSDDSSSHGCKMSTAPQES) are disordered.

The protein belongs to the sorting nexin family. Interacts with ATP6V1D; may play a role in ciliogenesis.

Its subcellular location is the cytoplasm. The protein localises to the endosome membrane. It is found in the cytoskeleton. The protein resides in the microtubule organizing center. It localises to the centrosome. In terms of biological role, probable phosphoinositide-binding protein involved in protein sorting and membrane trafficking in endosomes. Plays a role in cilium biogenesis through regulation of the transport and the localization of proteins to the cilium. Required for the localization to the cilium of V-ATPase subunit ATP6V1D and ATP6V0D1, and RAB8A. Involved in osteoclast differentiation and therefore bone resorption. This is Sorting nexin-10 (SNX10) from Bos taurus (Bovine).